A 261-amino-acid polypeptide reads, in one-letter code: Cytochrome c oxidase subunit 3 (261 aa).

At 1 to 15 (MTHQTHAYHMVNPSP) the chain is on the mitochondrial matrix side. The chain crosses the membrane as a helical span at residues 16 to 34 (WPLTGALSALLMTSGLIMW). The Mitochondrial intermembrane portion of the chain corresponds to 35 to 40 (FHFNST). The chain crosses the membrane as a helical span at residues 41–66 (TLLMLGLTTNMLTMYQWWRDIIREST). Residues 67-72 (FQGHHT) are Mitochondrial matrix-facing. The helical transmembrane segment at 73-105 (PNVQKGLRYGMILFIISEVLFFTGFFWAFYHSS) threads the bilayer. Residues 106-128 (LAPTPELGGCWPPTGIHPLNPLE) lie on the Mitochondrial intermembrane side of the membrane. The helical transmembrane segment at 129-152 (VPLLNTSVLLASGVSITWAHHSLM) threads the bilayer. The Mitochondrial matrix portion of the chain corresponds to 153–155 (EGN). The chain crosses the membrane as a helical span at residues 156–183 (RNHMLQALFITIALGVYFTLLQASEYYE). The Mitochondrial intermembrane segment spans residues 184–190 (APFTISD). Residues 191 to 223 (GVYGSTFFVATGFHGLHVIIGSTFLIVCFFRQL) form a helical membrane-spanning segment. Topologically, residues 224–232 (KFHFTSSHH) are mitochondrial matrix. Residues 233–256 (FGFEAAAWYWHFVDVVWLFLYVSI) form a helical membrane-spanning segment. Residues 257–261 (YWWGS) are Mitochondrial intermembrane-facing.

This sequence belongs to the cytochrome c oxidase subunit 3 family. As to quaternary structure, component of the cytochrome c oxidase (complex IV, CIV), a multisubunit enzyme composed of 14 subunits. The complex is composed of a catalytic core of 3 subunits MT-CO1, MT-CO2 and MT-CO3, encoded in the mitochondrial DNA, and 11 supernumerary subunits COX4I, COX5A, COX5B, COX6A, COX6B, COX6C, COX7A, COX7B, COX7C, COX8 and NDUFA4, which are encoded in the nuclear genome. The complex exists as a monomer or a dimer and forms supercomplexes (SCs) in the inner mitochondrial membrane with NADH-ubiquinone oxidoreductase (complex I, CI) and ubiquinol-cytochrome c oxidoreductase (cytochrome b-c1 complex, complex III, CIII), resulting in different assemblies (supercomplex SCI(1)III(2)IV(1) and megacomplex MCI(2)III(2)IV(2)).

Its subcellular location is the mitochondrion inner membrane. The enzyme catalyses 4 Fe(II)-[cytochrome c] + O2 + 8 H(+)(in) = 4 Fe(III)-[cytochrome c] + 2 H2O + 4 H(+)(out). Component of the cytochrome c oxidase, the last enzyme in the mitochondrial electron transport chain which drives oxidative phosphorylation. The respiratory chain contains 3 multisubunit complexes succinate dehydrogenase (complex II, CII), ubiquinol-cytochrome c oxidoreductase (cytochrome b-c1 complex, complex III, CIII) and cytochrome c oxidase (complex IV, CIV), that cooperate to transfer electrons derived from NADH and succinate to molecular oxygen, creating an electrochemical gradient over the inner membrane that drives transmembrane transport and the ATP synthase. Cytochrome c oxidase is the component of the respiratory chain that catalyzes the reduction of oxygen to water. Electrons originating from reduced cytochrome c in the intermembrane space (IMS) are transferred via the dinuclear copper A center (CU(A)) of subunit 2 and heme A of subunit 1 to the active site in subunit 1, a binuclear center (BNC) formed by heme A3 and copper B (CU(B)). The BNC reduces molecular oxygen to 2 water molecules using 4 electrons from cytochrome c in the IMS and 4 protons from the mitochondrial matrix. In Litocranius walleri (Gerenuk), this protein is Cytochrome c oxidase subunit 3 (MT-CO3).